We begin with the raw amino-acid sequence, 500 residues long: 2-isopropylmalate synthase (500 aa).

The Pyruvate carboxyltransferase domain occupies 5 to 266 (LFIFDTTLRD…ITNITTNKIY (262 aa)). Mn(2+) contacts are provided by D14, H202, H204, and N238. Residues 389-500 (KLEYLQVTSG…VDAINKFIVD (112 aa)) form a regulatory domain region.

It belongs to the alpha-IPM synthase/homocitrate synthase family. LeuA type 1 subfamily. Homodimer. Mn(2+) serves as cofactor.

The protein localises to the cytoplasm. The catalysed reaction is 3-methyl-2-oxobutanoate + acetyl-CoA + H2O = (2S)-2-isopropylmalate + CoA + H(+). The protein operates within amino-acid biosynthesis; L-leucine biosynthesis; L-leucine from 3-methyl-2-oxobutanoate: step 1/4. In terms of biological role, catalyzes the condensation of the acetyl group of acetyl-CoA with 3-methyl-2-oxobutanoate (2-ketoisovalerate) to form 3-carboxy-3-hydroxy-4-methylpentanoate (2-isopropylmalate). The chain is 2-isopropylmalate synthase from Parabacteroides distasonis (strain ATCC 8503 / DSM 20701 / CIP 104284 / JCM 5825 / NCTC 11152).